Reading from the N-terminus, the 455-residue chain is Argininosuccinate lyase (455 aa).

The protein belongs to the lyase 1 family. Argininosuccinate lyase subfamily.

It localises to the cytoplasm. It carries out the reaction 2-(N(omega)-L-arginino)succinate = fumarate + L-arginine. Its pathway is amino-acid biosynthesis; L-arginine biosynthesis; L-arginine from L-ornithine and carbamoyl phosphate: step 3/3. In Shewanella halifaxensis (strain HAW-EB4), this protein is Argininosuccinate lyase.